A 193-amino-acid polypeptide reads, in one-letter code: Ion-translocating oxidoreductase complex subunit A (193 aa).

Transmembrane regions (helical) follow at residues 5–25 (LLLFVGTVLVNNFVLVKFLGL), 39–59 (MGMGLATTFVMTLASICAWLI), 63–83 (ILIPLNLIYLRTLAFILVIAV), 102–122 (LLGIFLPLITTNCAVLGVALL), 134–154 (ALYGFSAAVGFSLVMVLFAAI), and 171–191 (AIALITAGLMSLAFMGFSGLV).

It belongs to the NqrDE/RnfAE family. The complex is composed of six subunits: RsxA, RsxB, RsxC, RsxD, RsxE and RsxG.

It is found in the cell inner membrane. Its function is as follows. Part of a membrane-bound complex that couples electron transfer with translocation of ions across the membrane. Required to maintain the reduced state of SoxR. The chain is Ion-translocating oxidoreductase complex subunit A from Shigella boydii serotype 18 (strain CDC 3083-94 / BS512).